A 365-amino-acid polypeptide reads, in one-letter code: tRNA/tmRNA (uracil-C(5))-methyltransferase (365 aa).

S-adenosyl-L-methionine-binding residues include Q189, Y217, N222, E238, and D298. Residue C323 is the Nucleophile of the active site. E357 serves as the catalytic Proton acceptor.

Belongs to the class I-like SAM-binding methyltransferase superfamily. RNA M5U methyltransferase family. TrmA subfamily.

It catalyses the reaction uridine(54) in tRNA + S-adenosyl-L-methionine = 5-methyluridine(54) in tRNA + S-adenosyl-L-homocysteine + H(+). The enzyme catalyses uridine(341) in tmRNA + S-adenosyl-L-methionine = 5-methyluridine(341) in tmRNA + S-adenosyl-L-homocysteine + H(+). In terms of biological role, dual-specificity methyltransferase that catalyzes the formation of 5-methyluridine at position 54 (m5U54) in all tRNAs, and that of position 341 (m5U341) in tmRNA (transfer-mRNA). This chain is tRNA/tmRNA (uracil-C(5))-methyltransferase, found in Shewanella frigidimarina (strain NCIMB 400).